Reading from the N-terminus, the 386-residue chain is S-adenosylmethionine synthase (386 aa).

Position 16 (H16) interacts with ATP. Residue D18 coordinates Mg(2+). E44 contacts K(+). Positions 57 and 100 each coordinate L-methionine. Residues 100–110 form a flexible loop region; it reads QSRDITQGVDR. ATP is bound by residues 165-167, D240, 246-247, A263, and K267; these read DAK and RK. Position 240 (D240) interacts with L-methionine. K271 contacts L-methionine.

The protein belongs to the AdoMet synthase family. Homotetramer; dimer of dimers. Mg(2+) serves as cofactor. The cofactor is K(+).

The protein resides in the cytoplasm. It catalyses the reaction L-methionine + ATP + H2O = S-adenosyl-L-methionine + phosphate + diphosphate. The protein operates within amino-acid biosynthesis; S-adenosyl-L-methionine biosynthesis; S-adenosyl-L-methionine from L-methionine: step 1/1. In terms of biological role, catalyzes the formation of S-adenosylmethionine (AdoMet) from methionine and ATP. The overall synthetic reaction is composed of two sequential steps, AdoMet formation and the subsequent tripolyphosphate hydrolysis which occurs prior to release of AdoMet from the enzyme. This is S-adenosylmethionine synthase from Francisella tularensis subsp. tularensis (strain WY96-3418).